Consider the following 578-residue polypeptide: Transcriptional regulator SKO1 (578 aa).

Over residues 39–50 (NDAISDVNSVAT) the composition is skewed to polar residues. Disordered stretches follow at residues 39–169 (NDAI…TQQP), 176–195 (MSGM…RSGL), 287–311 (LQQD…QPQP), and 342–489 (ESKP…RKNF). Over residues 51 to 62 (SGSSINNGSSSN) the composition is skewed to low complexity. Polar residues-rich tracts occupy residues 70–80 (NISSVNQQQGV) and 107–132 (GGTT…TLGS). The segment covering 154–169 (PQQQQQPQQQQQTQQP) has biased composition (low complexity). Polar residues predominate over residues 184–193 (LTPNESNIRS). Low complexity-rich tracts occupy residues 287–296 (LQQDQSSQAL) and 356–370 (DLNP…TTTA). Positions 384 to 402 (KKAKVAKGKKKEPKSKSKG) are enriched in basic residues. The segment covering 415-443 (KPEDENVPGKENGNEENHKVEAESKEEHL) has biased composition (basic and acidic residues). Positions 445–471 (NGNETTTTKTNNTGNSSNGTTTTTTTK) are enriched in low complexity. The bZIP domain occupies 483–546 (DDKRKNFLER…LLLKEKHNIQ (64 aa)). The basic motif stretch occupies residues 485–505 (KRKNFLERNRVAASKCRQRKK). A leucine-zipper region spans residues 508–515 (IQKMEEEL).

It belongs to the bZIP family. Post-translationally, undergoes HOG1-dependent phosphorylation after osmotic stress.

Its subcellular location is the nucleus. Its function is as follows. Transcription repressor involved in cell wall damage response. Regulates 79 caspofungin-responsive genes, including several cell wall biogenesis genes such as CRH11, MNN2, and SKN1. Also controls the expression of pathogenesis and hyphal related genes and represses the yeast-to-hypha transition. Mediates the response to oxidative stress. The chain is Transcriptional regulator SKO1 (SKO1) from Candida albicans (strain SC5314 / ATCC MYA-2876) (Yeast).